We begin with the raw amino-acid sequence, 60 residues long: Cytotoxin 1 (60 aa).

4 disulfide bridges follow: Cys-3–Cys-21, Cys-14–Cys-38, Cys-42–Cys-53, and Cys-54–Cys-59.

Belongs to the three-finger toxin family. Short-chain subfamily. Type IA cytotoxin sub-subfamily. In terms of assembly, monomer in solution; Homodimer and oligomer in the presence of negatively charged lipids forming a pore with a size ranging between 20 and 30 Angstroms. Expressed by the venom gland.

It localises to the secreted. The protein resides in the target cell membrane. Its function is as follows. Shows cytolytic activity on many different cells by forming pore in lipid membranes. In vivo, increases heart rate or kills the animal by cardiac arrest. In addition, it binds to heparin with high affinity, interacts with Kv channel-interacting protein 1 (KCNIP1) in a calcium-independent manner, and binds to integrin alpha-V/beta-3 (ITGAV/ITGB3) with moderate affinity. This Naja melanoleuca (Forest cobra) protein is Cytotoxin 1.